Here is a 196-residue protein sequence, read N- to C-terminus: Putative 3-methyladenine DNA glycosylase (196 aa).

It belongs to the DNA glycosylase MPG family.

The protein is Putative 3-methyladenine DNA glycosylase of Bacillus licheniformis (strain ATCC 14580 / DSM 13 / JCM 2505 / CCUG 7422 / NBRC 12200 / NCIMB 9375 / NCTC 10341 / NRRL NRS-1264 / Gibson 46).